Here is a 205-residue protein sequence, read N- to C-terminus: Thiamine-phosphate synthase (205 aa).

4-amino-2-methyl-5-(diphosphooxymethyl)pyrimidine is bound by residues 35-39 and Asn-67; that span reads QYRDK. Mg(2+) is bound by residues Asp-68 and Asp-86. A 4-amino-2-methyl-5-(diphosphooxymethyl)pyrimidine-binding site is contributed by Thr-105. A 2-[(2R,5Z)-2-carboxy-4-methylthiazol-5(2H)-ylidene]ethyl phosphate-binding site is contributed by 132-134; the sequence is SLT. Residue Lys-135 participates in 4-amino-2-methyl-5-(diphosphooxymethyl)pyrimidine binding. Gly-162 contacts 2-[(2R,5Z)-2-carboxy-4-methylthiazol-5(2H)-ylidene]ethyl phosphate.

It belongs to the thiamine-phosphate synthase family. The cofactor is Mg(2+).

It catalyses the reaction 2-[(2R,5Z)-2-carboxy-4-methylthiazol-5(2H)-ylidene]ethyl phosphate + 4-amino-2-methyl-5-(diphosphooxymethyl)pyrimidine + 2 H(+) = thiamine phosphate + CO2 + diphosphate. The catalysed reaction is 2-(2-carboxy-4-methylthiazol-5-yl)ethyl phosphate + 4-amino-2-methyl-5-(diphosphooxymethyl)pyrimidine + 2 H(+) = thiamine phosphate + CO2 + diphosphate. The enzyme catalyses 4-methyl-5-(2-phosphooxyethyl)-thiazole + 4-amino-2-methyl-5-(diphosphooxymethyl)pyrimidine + H(+) = thiamine phosphate + diphosphate. The protein operates within cofactor biosynthesis; thiamine diphosphate biosynthesis; thiamine phosphate from 4-amino-2-methyl-5-diphosphomethylpyrimidine and 4-methyl-5-(2-phosphoethyl)-thiazole: step 1/1. Condenses 4-methyl-5-(beta-hydroxyethyl)thiazole monophosphate (THZ-P) and 2-methyl-4-amino-5-hydroxymethyl pyrimidine pyrophosphate (HMP-PP) to form thiamine monophosphate (TMP). In Pseudomonas syringae pv. syringae (strain B728a), this protein is Thiamine-phosphate synthase.